The chain runs to 620 residues: Glutathione-regulated potassium-efflux system protein KefC (620 aa).

Helical transmembrane passes span 4–24 (HTLIQALIYLGSAALIVPVAV), 26–46 (LGLGSVLGYLIAGGLIGPWGL), 54–74 (AILHFAEIGVVLMLFVIGLEL), 86–106 (VFGGGALQMGACGLLLGGFCV), 114–134 (VALLIGLTLALSSTAIAMQAM), 149–169 (FAVLLFQDIAAIPLVAMIPLL), 178–198 (ASAFFLSALKVVGALALVVLL), 218–238 (VFSAVALFLVFGFGLLLEEAG), 271–291 (LLLGLFFIGVGMSIDFGTLVA), 296–316 (VLTLLFGFLIIKTVTLWLVAK), 326–346 (RWFAVLLGQGSEFAFVIFGAA), and 359–379 (ALTLAVALSMAATPLLLVLLT). Residues 399 to 518 (QPRVIIAGFG…AGVAQPERET (120 aa)) form the RCK N-terminal domain. The segment at 596 to 620 (HGWQGTREGKHTGNDADEPEVKPQP) is disordered.

It belongs to the monovalent cation:proton antiporter 2 (CPA2) transporter (TC 2.A.37) family. KefC subfamily. Homodimer. Interacts with the regulatory subunit KefF.

The protein localises to the cell inner membrane. Its function is as follows. Pore-forming subunit of a potassium efflux system that confers protection against electrophiles. Catalyzes K(+)/H(+) antiport. In Cronobacter sakazakii (strain ATCC BAA-894) (Enterobacter sakazakii), this protein is Glutathione-regulated potassium-efflux system protein KefC.